A 318-amino-acid polypeptide reads, in one-letter code: D-alanine--D-alanine ligase B (318 aa).

One can recognise an ATP-grasp domain in the interval 117 to 315 (KQVWLSLGLS…FEALVWRVLE (199 aa)). 146–201 (AEQIGLPVIVKPANEGSSVGVSRVFDQAQLDEAVTLAARYDGALLMEQLIEGDELT) is an ATP binding site. Mg(2+) contacts are provided by Asp268, Glu282, and Asn284.

It belongs to the D-alanine--D-alanine ligase family. Mg(2+) serves as cofactor. Requires Mn(2+) as cofactor.

Its subcellular location is the cytoplasm. It carries out the reaction 2 D-alanine + ATP = D-alanyl-D-alanine + ADP + phosphate + H(+). The protein operates within cell wall biogenesis; peptidoglycan biosynthesis. Its function is as follows. Cell wall formation. This Xanthomonas campestris pv. campestris (strain ATCC 33913 / DSM 3586 / NCPPB 528 / LMG 568 / P 25) protein is D-alanine--D-alanine ligase B.